We begin with the raw amino-acid sequence, 227 residues long: Cytochrome c oxidase subunit 2 (227 aa).

Topologically, residues 1–14 (MAYPLQMGLQDATS) are mitochondrial intermembrane. The helical transmembrane segment at 15–45 (PIMEELLHFHDHTLMIVFLISSLVLYIISLM) threads the bilayer. At 46–59 (LTTKLTHTSTMDAQ) the chain is on the mitochondrial matrix side. Residues 60–87 (EVETVWTILPAIILILIALPSLRILYMM) form a helical membrane-spanning segment. Residues 88-227 (DEINNPSLTV…HFEKWSTSML (140 aa)) are Mitochondrial intermembrane-facing. Cu cation contacts are provided by His161, Cys196, Glu198, Cys200, His204, and Met207. Glu198 serves as a coordination point for Mg(2+).

This sequence belongs to the cytochrome c oxidase subunit 2 family. Component of the cytochrome c oxidase (complex IV, CIV), a multisubunit enzyme composed of 14 subunits. The complex is composed of a catalytic core of 3 subunits MT-CO1, MT-CO2 and MT-CO3, encoded in the mitochondrial DNA, and 11 supernumerary subunits COX4I, COX5A, COX5B, COX6A, COX6B, COX6C, COX7A, COX7B, COX7C, COX8 and NDUFA4, which are encoded in the nuclear genome. The complex exists as a monomer or a dimer and forms supercomplexes (SCs) in the inner mitochondrial membrane with NADH-ubiquinone oxidoreductase (complex I, CI) and ubiquinol-cytochrome c oxidoreductase (cytochrome b-c1 complex, complex III, CIII), resulting in different assemblies (supercomplex SCI(1)III(2)IV(1) and megacomplex MCI(2)III(2)IV(2)). Found in a complex with TMEM177, COA6, COX18, COX20, SCO1 and SCO2. Interacts with TMEM177 in a COX20-dependent manner. Interacts with COX20. Interacts with COX16. Cu cation is required as a cofactor.

The protein localises to the mitochondrion inner membrane. It catalyses the reaction 4 Fe(II)-[cytochrome c] + O2 + 8 H(+)(in) = 4 Fe(III)-[cytochrome c] + 2 H2O + 4 H(+)(out). Component of the cytochrome c oxidase, the last enzyme in the mitochondrial electron transport chain which drives oxidative phosphorylation. The respiratory chain contains 3 multisubunit complexes succinate dehydrogenase (complex II, CII), ubiquinol-cytochrome c oxidoreductase (cytochrome b-c1 complex, complex III, CIII) and cytochrome c oxidase (complex IV, CIV), that cooperate to transfer electrons derived from NADH and succinate to molecular oxygen, creating an electrochemical gradient over the inner membrane that drives transmembrane transport and the ATP synthase. Cytochrome c oxidase is the component of the respiratory chain that catalyzes the reduction of oxygen to water. Electrons originating from reduced cytochrome c in the intermembrane space (IMS) are transferred via the dinuclear copper A center (CU(A)) of subunit 2 and heme A of subunit 1 to the active site in subunit 1, a binuclear center (BNC) formed by heme A3 and copper B (CU(B)). The BNC reduces molecular oxygen to 2 water molecules using 4 electrons from cytochrome c in the IMS and 4 protons from the mitochondrial matrix. This is Cytochrome c oxidase subunit 2 (MT-CO2) from Phoca vitulina (Harbor seal).